The sequence spans 543 residues: Periplasmic oligopeptide-binding protein OppA (543 aa).

The N-terminal stretch at 1-26 (MSNITKKSLIAAGILTALIAASAATA) is a signal peptide. The cysteines at positions 297 and 443 are disulfide-linked.

This sequence belongs to the bacterial solute-binding protein 5 family. The complex is composed of two ATP-binding proteins (OppD and OppF), two transmembrane proteins (OppB and OppC) and a solute-binding protein (OppA).

It is found in the periplasm. Functionally, part of the ABC transporter complex OppABCDF involved in the uptake of oligopeptides, including the cell wall murein tripeptide L-alanyl-gamma-D-glutamyl-meso-diaminopimelate. Plays an important nutritional role and is involved in the recycling of cell wall peptides. Binds peptides containing from two to five amino acid residues regardless of their sequence. Also binds cell wall peptides, such as L-alanyl-gamma-D-glutamyl-meso-diaminopimelate. The protein is Periplasmic oligopeptide-binding protein OppA of Salmonella typhimurium (strain LT2 / SGSC1412 / ATCC 700720).